The chain runs to 845 residues: Leucine--tRNA ligase (845 aa).

The short motif at 40–51 is the 'HIGH' region element; sequence PYPSGAGLHVGH. The 'KMSKS' region motif lies at 623 to 627; that stretch reads KMSKS. Lysine 626 contacts ATP.

Belongs to the class-I aminoacyl-tRNA synthetase family.

The protein resides in the cytoplasm. It carries out the reaction tRNA(Leu) + L-leucine + ATP = L-leucyl-tRNA(Leu) + AMP + diphosphate. The sequence is that of Leucine--tRNA ligase from Protochlamydia amoebophila (strain UWE25).